We begin with the raw amino-acid sequence, 71 residues long: MSSCGCGSGCSCGSGCNCKNPVLGLSEKTTSKTIVADVAPVKSHPEGSEMSVEGGHGCKCGSSCNCDPCNC.

It belongs to the metallothionein superfamily. Type 15 family.

Functionally, metallothioneins have a high content of cysteine residues that bind various heavy metals. This chain is Metallothionein-like protein 1 (MT1), found in Casuarina glauca (Swamp oak).